The chain runs to 316 residues: Protoheme IX farnesyltransferase (316 aa).

The next 9 helical transmembrane spans lie at 32–52 (VMSL…GHIN), 53–73 (PVLG…SGAL), 93–113 (IPAG…LSGF), 116–136 (VILG…TIFF), 152–172 (NIVI…ACVT), 180–200 (TVLF…LALF), 221–241 (VTKH…VLPS), 252–271 (LVAA…VWRM), and 289–309 (IFYL…AILV).

The protein belongs to the UbiA prenyltransferase family. Protoheme IX farnesyltransferase subfamily.

It localises to the cell inner membrane. The catalysed reaction is heme b + (2E,6E)-farnesyl diphosphate + H2O = Fe(II)-heme o + diphosphate. It participates in porphyrin-containing compound metabolism; heme O biosynthesis; heme O from protoheme: step 1/1. In terms of biological role, converts heme B (protoheme IX) to heme O by substitution of the vinyl group on carbon 2 of heme B porphyrin ring with a hydroxyethyl farnesyl side group. In Rhizobium etli (strain ATCC 51251 / DSM 11541 / JCM 21823 / NBRC 15573 / CFN 42), this protein is Protoheme IX farnesyltransferase.